Here is a 1675-residue protein sequence, read N- to C-terminus: Clathrin heavy chain 1 (1675 aa).

Residue Ala-2 is modified to N-acetylalanine. Residues 2 to 479 (AQILPIRFQE…VDPTLALSVY (478 aa)) are globular terminal domain. 7 WD40-like repeat regions span residues 24–67 (NIGF…RPIS), 68–107 (ADSA…MTDD), 108–149 (VTFW…SSLA), 150–195 (GCQI…QPIE), 196–257 (GHAA…PEAQ), 258–301 (NDFP…ISGE), and 302–330 (TIFV…VCVE). Phosphoserine is present on Ser-67. Residue Thr-105 is modified to Phosphothreonine. At Tyr-184 the chain carries Phosphotyrosine. Thr-394 carries the phosphothreonine modification. The tract at residues 449 to 465 (EKWLKEDKLECSEELGD) is binding site for the uncoating ATPase, involved in lattice disassembly. Residues 480–523 (LRANVPNKVIQCFAETGQVQKIVLYAKKVGYTPDWIFLLRNVMR) are flexible linker. Residues 524–634 (ISPDQGQQFA…RALEHFTDLY (111 aa)) form a distal segment region. A heavy chain arm region spans residues 524 to 1675 (ISPDQGQQFA…QPQPGFGYSM (1152 aa)). CHCR repeat units lie at residues 537–683 (VQDE…QIWV), 686–828 (ASKY…SEDV), 833–972 (ILVV…PLID), 979–1124 (LSET…VKEA), 1128–1269 (YIKA…FRLA), 1274–1420 (LHIV…LLLN), and 1423–1566 (LMVL…RECF). Residue Tyr-634 is modified to Phosphotyrosine. Residues 639-1675 (AVVHTHLLNP…QPQPGFGYSM (1037 aa)) form a proximal segment region. Lys-737 carries the post-translational modification N6-succinyllysine. An N6-acetyllysine modification is found at Lys-856. Tyr-899 is modified (phosphotyrosine). Position 1167 is a phosphoserine (Ser-1167). Tyr-1206 is modified (phosphotyrosine). An involved in binding clathrin light chain region spans residues 1213 to 1522 (AAKLLYNNVS…YLFKGNNRWK (310 aa)). Position 1229 is a phosphoserine (Ser-1229). An N6-acetyllysine; alternate modification is found at Lys-1441. An N6-succinyllysine; alternate modification is found at Lys-1441. Phosphotyrosine is present on residues Tyr-1477 and Tyr-1487. Phosphoserine is present on Ser-1494. Lys-1501 carries the post-translational modification N6-acetyllysine. Positions 1550–1675 (AEELLQWFLQ…QPQPGFGYSM (126 aa)) are trimerization.

The protein belongs to the clathrin heavy chain family. As to quaternary structure, clathrin triskelions, composed of 3 heavy chains and 3 light chains, are the basic subunits of the clathrin coat. In the presence of light chains, hub assembly is influenced by both the pH and the concentration of calcium. Interacts with HIP1. Interacts with DENND1A, DENND1B and DENND1C. Interacts with OCRL. Interacts with ERBB2. Interacts with FKBP6. Interacts with CKAP5 and TACC3 forming the TACC3/ch-TOG/clathrin complex located at spindle inter-microtubules bridges; the complex implicates clathrin triskelions; TACC3 and CLTC are proposed to form a composite microtubule interaction surface. Interacts with ATG16L1 (via N-terminus). Interacts with RFTN1; the interaction occurs in response to pathogens. Interacts with USP2 isoform 2. Interacts with TMEM106B (via N-terminus). Interacts with DNAJC6; this interaction produces a local change in heavy-chain contacts, creating a detectable global distortion of the clathrin coat and leads to the recruitment of HSPA8.

It localises to the cytoplasmic vesicle membrane. The protein resides in the membrane. It is found in the coated pit. Its subcellular location is the melanosome. The protein localises to the cytoplasm. It localises to the cytoskeleton. The protein resides in the spindle. Clathrin is the major protein of the polyhedral coat of coated pits and vesicles. Two different adapter protein complexes link the clathrin lattice either to the plasma membrane or to the trans-Golgi network. Acts as a component of the TACC3/ch-TOG/clathrin complex proposed to contribute to stabilization of kinetochore fibers of the mitotic spindle by acting as inter-microtubule bridge. The TACC3/ch-TOG/clathrin complex is required for the maintenance of kinetochore fiber tension. Plays a role in early autophagosome formation. Interaction with DNAJC6 mediates the recruitment of HSPA8 to the clathrin lattice and creates local destabilization of the lattice promoting uncoating. The sequence is that of Clathrin heavy chain 1 from Rattus norvegicus (Rat).